The primary structure comprises 162 residues: uncharacterized protein (162 aa).

This is an uncharacterized protein from Homo sapiens (Human).